The primary structure comprises 65 residues: uncharacterized protein (65 aa).

This is an uncharacterized protein from Saccharomyces cerevisiae (strain ATCC 204508 / S288c) (Baker's yeast).